The chain runs to 284 residues: MLIIETLPLLRQHIRRLRQEGKRVALVPTMGNLHDGHMKLVDEAKARADVVFVSIFVNPMQFDRPDDLVRYPRTLQEDCEKLNKRKVDYVFAPAVEEIYPQGLEGQTYVDVPGLSTMLEGASRPGHFRGVSTIVSKLFNLIQPDIACFGEKDFQQLALIRKMVADMSYDIEIVGVPIIRAKDGLALSSRNSYLTAEQRKIAPGLHNVMNSIAEKLIAGNRELQEIIAIAEQELNEKGFRADDIQIRDADTLLELTETSKRAVILAAAWLGQARLIDNQSVTLAQ.

30-37 (MGNLHDGH) is a binding site for ATP. The active-site Proton donor is H37. Q61 serves as a coordination point for (R)-pantoate. Q61 serves as a coordination point for beta-alanine. Residue 149–152 (GEKD) participates in ATP binding. Residue Q155 participates in (R)-pantoate binding. Residues I178 and 186-189 (LSSR) contribute to the ATP site.

Belongs to the pantothenate synthetase family. As to quaternary structure, homodimer.

The protein resides in the cytoplasm. It catalyses the reaction (R)-pantoate + beta-alanine + ATP = (R)-pantothenate + AMP + diphosphate + H(+). The protein operates within cofactor biosynthesis; (R)-pantothenate biosynthesis; (R)-pantothenate from (R)-pantoate and beta-alanine: step 1/1. In terms of biological role, catalyzes the condensation of pantoate with beta-alanine in an ATP-dependent reaction via a pantoyl-adenylate intermediate. The polypeptide is Pantothenate synthetase (Salmonella paratyphi B (strain ATCC BAA-1250 / SPB7)).